The sequence spans 518 residues: Protease Do-like 4, mitochondrial (518 aa).

Residues 1–23 (MLFRFLQTLARFCRFLLISVLGF) constitute a mitochondrion transit peptide. A serine protease region spans residues 98–262 (ESGGSGFVIS…IPTPVIKHFL (165 aa)). Catalysis depends on charge relay system residues His116, Asp147, and Ser225. One can recognise a PDZ domain in the interval 278–358 (DISYQLMENS…HFVSMKKLDE (81 aa)).

Belongs to the peptidase S1C family.

It localises to the mitochondrion membrane. Functionally, putative serine protease. The protein is Protease Do-like 4, mitochondrial (DEGP4) of Arabidopsis thaliana (Mouse-ear cress).